We begin with the raw amino-acid sequence, 420 residues long: Glucose-1-phosphate adenylyltransferase (420 aa).

Residues Tyr107, Gly172, 187-188, and Ser205 each bind alpha-D-glucose 1-phosphate; that span reads EK.

This sequence belongs to the bacterial/plant glucose-1-phosphate adenylyltransferase family. As to quaternary structure, homotetramer.

It catalyses the reaction alpha-D-glucose 1-phosphate + ATP + H(+) = ADP-alpha-D-glucose + diphosphate. It participates in glycan biosynthesis; glycogen biosynthesis. In terms of biological role, involved in the biosynthesis of ADP-glucose, a building block required for the elongation reactions to produce glycogen. Catalyzes the reaction between ATP and alpha-D-glucose 1-phosphate (G1P) to produce pyrophosphate and ADP-Glc. This chain is Glucose-1-phosphate adenylyltransferase, found in Sinorhizobium fredii (strain NBRC 101917 / NGR234).